The following is a 136-amino-acid chain: Lymphocyte antigen 6E (136 aa).

A signal peptide spans 1–26; the sequence is MSATSNMRVFLPVLLAALLGMEQVHS. Positions 27 to 118 constitute a UPAR/Ly6 domain; the sequence is LMCFSCTDQK…AGLGLRASIP (92 aa). 5 cysteine pairs are disulfide-bonded: cysteine 29/cysteine 54, cysteine 32/cysteine 41, cysteine 47/cysteine 76, cysteine 80/cysteine 98, and cysteine 99/cysteine 104. Asparagine 105 carries an N-linked (GlcNAc...) asparagine glycan. Alanine 108 carries GPI-anchor amidated alanine lipidation. Residues 109–136 constitute a propeptide, removed in mature form; it reads AGLGLRASIPLLGLGLLLSLLALLQLSP.

In terms of assembly, interacts with CHRNA4. Interacts with CD3Z/CD247. As to expression, ubiquitously expressed in mouse adult tissues with maximal expression in the lung and the salivary gland. Expression is strikingly lower in the fetal tissues except for the placenta. Present in thymus where its expression is observed in immature thymocytes and thymic stromal cells. Also found on functionally active T-cells as well as B-cells and thymic dendritic cells.

It localises to the cell membrane. Its function is as follows. GPI-anchored cell surface protein that regulates T-lymphocytes proliferation, differentiation, and activation. Regulates the T-cell receptor (TCR) signaling by interacting with component CD3Z/CD247 at the plasma membrane, leading to CD3Z/CD247 phosphorylation modulation. Restricts the entry of murine coronavirus, mouse hepatitis virus, by interfering with spike protein-mediated membrane fusion. Also plays an essential role in placenta formation by acting as the main receptor for syncytin-A (SynA). Therefore, participates in the normal fusion of syncytiotrophoblast layer I (SynT-I) and in the proper morphogenesis of both fetal and maternal vasculatures within the placenta. May also act as a modulator of nicotinic acetylcholine receptors (nAChRs) activity. In vitro inhibits alpha-3:beta-4-containing nAChRs maximum response. The polypeptide is Lymphocyte antigen 6E (Mus musculus (Mouse)).